The sequence spans 563 residues: Arginine--tRNA ligase (563 aa).

A 'HIGH' region motif is present at residues 120 to 130; it reads PNIAKPFHIGH.

The protein belongs to the class-I aminoacyl-tRNA synthetase family. Monomer.

The protein resides in the cytoplasm. It carries out the reaction tRNA(Arg) + L-arginine + ATP = L-arginyl-tRNA(Arg) + AMP + diphosphate. This chain is Arginine--tRNA ligase, found in Clostridium botulinum (strain Loch Maree / Type A3).